The primary structure comprises 178 residues: MQNKQNLIWIDLEMTGLDPDTDVIIEMATIITDSELNTLAEGPVIAVHQSDETLAKMDEWNTRQHGGSGLTQRVRESTISMADAEAQTLAFIKLWVPERSSPICGNSICQDRRFLYRHMPALENYFHYRNLDVSTLKELAARWAPELKFKKGSTHLALDDIRESIAELRFYREHFIKP.

The 162-residue stretch at 7–168 (LIWIDLEMTG…DDIRESIAEL (162 aa)) folds into the Exonuclease domain. Residue Tyr128 is part of the active site.

The protein belongs to the oligoribonuclease family.

The protein localises to the cytoplasm. 3'-to-5' exoribonuclease specific for small oligoribonucleotides. This chain is Oligoribonuclease, found in Pseudomonas syringae pv. tomato (strain ATCC BAA-871 / DC3000).